The primary structure comprises 316 residues: PHD finger protein 20-like protein 1 (316 aa).

The Tudor 1 domain maps to 11–71; that stretch reads ITFEIGARLE…SNRLRPLERP (61 aa). Glycyl lysine isopeptide (Lys-Gly) (interchain with G-Cter in SUMO2) cross-links involve residues Lys-75 and Lys-79. The 57-residue stretch at 85–141 folds into the Tudor 2 domain; that stretch reads FDFKAGEEVLARWTDCRYYPAKIEAINKEGTFTVQFYDGVIRCLKRMHIKAMPEDAK. A disordered region spans residues 183–237; that stretch reads AKNKTGNKPRTSANSNKDKEKDERKWFKVPSKKEETSTSITTPEVEKKEDLPTSS. The segment covering 186-197 has biased composition (polar residues); that stretch reads KTGNKPRTSANS. Basic and acidic residues predominate over residues 198-218; sequence NKDKEKDERKWFKVPSKKEET.

Interacts with methylated DNMT1 (DNMT1K142me1). Interacts with SOX2.

It localises to the nucleus. Its function is as follows. Is a negative regulator of proteasomal degradation of a set of methylated proteins, including DNMT1 and SOX2. Involved in the maintainance of embryonic stem cells pluripotency, through the regulation of SOX2 levels. The chain is PHD finger protein 20-like protein 1 (PHF20L1) from Bos taurus (Bovine).